The following is an 835-amino-acid chain: Phenylalanine--tRNA ligase beta subunit (835 aa).

Residues proline 44–arginine 160 enclose the tRNA-binding domain. In terms of domain architecture, B5 spans proline 419–threonine 494. Residues aspartate 472, aspartate 478, glutamate 481, and glutamate 482 each coordinate Mg(2+). Positions serine 741–arginine 834 constitute an FDX-ACB domain.

It belongs to the phenylalanyl-tRNA synthetase beta subunit family. Type 1 subfamily. Tetramer of two alpha and two beta subunits. The cofactor is Mg(2+).

The protein resides in the cytoplasm. It carries out the reaction tRNA(Phe) + L-phenylalanine + ATP = L-phenylalanyl-tRNA(Phe) + AMP + diphosphate + H(+). The protein is Phenylalanine--tRNA ligase beta subunit of Corynebacterium glutamicum (strain ATCC 13032 / DSM 20300 / JCM 1318 / BCRC 11384 / CCUG 27702 / LMG 3730 / NBRC 12168 / NCIMB 10025 / NRRL B-2784 / 534).